Consider the following 281-residue polypeptide: 4-diphosphocytidyl-2-C-methyl-D-erythritol kinase (281 aa).

Lys-15 is a catalytic residue. An ATP-binding site is contributed by 98–108; that stretch reads PTGAGLGGGSS. Asp-140 is a catalytic residue.

Belongs to the GHMP kinase family. IspE subfamily.

The catalysed reaction is 4-CDP-2-C-methyl-D-erythritol + ATP = 4-CDP-2-C-methyl-D-erythritol 2-phosphate + ADP + H(+). Its pathway is isoprenoid biosynthesis; isopentenyl diphosphate biosynthesis via DXP pathway; isopentenyl diphosphate from 1-deoxy-D-xylulose 5-phosphate: step 3/6. In terms of biological role, catalyzes the phosphorylation of the position 2 hydroxy group of 4-diphosphocytidyl-2C-methyl-D-erythritol. This Neisseria gonorrhoeae (strain NCCP11945) protein is 4-diphosphocytidyl-2-C-methyl-D-erythritol kinase.